The following is a 387-amino-acid chain: Mannitol-1-phosphate 5-dehydrogenase (387 aa).

An NAD(+)-binding site is contributed by 3-14 (ALHFGAGNIGRG).

The protein belongs to the mannitol dehydrogenase family.

It carries out the reaction D-mannitol 1-phosphate + NAD(+) = beta-D-fructose 6-phosphate + NADH + H(+). This Yersinia pseudotuberculosis serotype O:1b (strain IP 31758) protein is Mannitol-1-phosphate 5-dehydrogenase.